A 376-amino-acid chain; its full sequence is Flagellin B (376 aa).

Residues 103–129 adopt a coiled-coil conformation; that stretch reads SNSSSERRAIQEEVSALNDELNRIAET.

It belongs to the bacterial flagellin family. Heteromer of multiple flagellin subunits including FlaA, FlaB, FlaC, FlaD and FlaE.

It is found in the secreted. Its subcellular location is the bacterial flagellum. Its function is as follows. Flagellin is the subunit protein which polymerizes to form the filaments of bacterial flagella. FlaB is not essential for flagellar synthesis and motility. This chain is Flagellin B (flaB), found in Vibrio cholerae serotype O1 (strain ATCC 39541 / Classical Ogawa 395 / O395).